Consider the following 292-residue polypeptide: Diaminopimelate epimerase (292 aa).

Substrate contacts are provided by N14 and N78. C87 serves as the catalytic Proton donor. Residues 88-89, N164, N197, and 221-222 contribute to the substrate site; these read GN and ER. The active-site Proton acceptor is C230. Substrate is bound at residue 231-232; sequence GT.

The protein belongs to the diaminopimelate epimerase family. As to quaternary structure, homodimer.

It is found in the cytoplasm. The enzyme catalyses (2S,6S)-2,6-diaminopimelate = meso-2,6-diaminopimelate. It functions in the pathway amino-acid biosynthesis; L-lysine biosynthesis via DAP pathway; DL-2,6-diaminopimelate from LL-2,6-diaminopimelate: step 1/1. Catalyzes the stereoinversion of LL-2,6-diaminopimelate (L,L-DAP) to meso-diaminopimelate (meso-DAP), a precursor of L-lysine and an essential component of the bacterial peptidoglycan. The polypeptide is Diaminopimelate epimerase (Leifsonia xyli subsp. xyli (strain CTCB07)).